Reading from the N-terminus, the 185-residue chain is CASP-like protein 2C3 (185 aa).

Topologically, residues 1–13 are cytoplasmic; sequence MAAAARVSEVKAE. Residues 14-34 form a helical membrane-spanning segment; it reads GLLRGACAALAAAAALLVGLS. Over 35–53 the chain is Extracellular; it reads TQTETVLLVRKKATVKDVQ. Residues 54–74 traverse the membrane as a helical segment; that stretch reads ALWVLAMAAAAAAGYHLLQLL. Residues 75–104 are Cytoplasmic-facing; it reads KCLYLGRVGGARPCRRSSRALAWTCLLLDK. A helical membrane pass occupies residues 105-125; the sequence is ACAYTTFATTVAAAQACVVAL. Topologically, residues 126–146 are extracellular; sequence DGAHAVQWTKLCNIYTRFCEQ. A helical membrane pass occupies residues 147 to 167; it reads VAGSLVLGMLAAVGTAVLSAA. The Cytoplasmic segment spans residues 168–185; sequence SARNVFRHYSSLETYAAH.

It belongs to the Casparian strip membrane proteins (CASP) family. In terms of assembly, homodimer and heterodimers.

It localises to the cell membrane. The polypeptide is CASP-like protein 2C3 (Zea mays (Maize)).